The following is a 221-amino-acid chain: Octanoyltransferase (221 aa).

A BPL/LPL catalytic domain is found at Asp-31–Lys-213. Substrate-binding positions include Arg-70–His-77, Ser-142–Gly-144, and Gly-155–Ala-157. Cys-173 acts as the Acyl-thioester intermediate in catalysis.

It belongs to the LipB family.

It is found in the cytoplasm. The catalysed reaction is octanoyl-[ACP] + L-lysyl-[protein] = N(6)-octanoyl-L-lysyl-[protein] + holo-[ACP] + H(+). The protein operates within protein modification; protein lipoylation via endogenous pathway; protein N(6)-(lipoyl)lysine from octanoyl-[acyl-carrier-protein]: step 1/2. Catalyzes the transfer of endogenously produced octanoic acid from octanoyl-acyl-carrier-protein onto the lipoyl domains of lipoate-dependent enzymes. Lipoyl-ACP can also act as a substrate although octanoyl-ACP is likely to be the physiological substrate. The polypeptide is Octanoyltransferase (Mannheimia succiniciproducens (strain KCTC 0769BP / MBEL55E)).